Here is a 61-residue protein sequence, read N- to C-terminus: MDTKLLDILACPLCKGPLKLAEDKSELICKADGLAFPVRDGIPVMLESEARTLDVDERLDK.

The protein belongs to the UPF0434 family.

This is UPF0434 protein PST_2635 from Stutzerimonas stutzeri (strain A1501) (Pseudomonas stutzeri).